The sequence spans 348 residues: Methylthioribose-1-phosphate isomerase (348 aa).

Substrate contacts are provided by residues 47–49 (RGA), R90, and Q196. Catalysis depends on D237, which acts as the Proton donor. A substrate-binding site is contributed by 247 to 248 (NK).

This sequence belongs to the eIF-2B alpha/beta/delta subunits family. MtnA subfamily.

The enzyme catalyses 5-(methylsulfanyl)-alpha-D-ribose 1-phosphate = 5-(methylsulfanyl)-D-ribulose 1-phosphate. Its pathway is amino-acid biosynthesis; L-methionine biosynthesis via salvage pathway; L-methionine from S-methyl-5-thio-alpha-D-ribose 1-phosphate: step 1/6. Catalyzes the interconversion of methylthioribose-1-phosphate (MTR-1-P) into methylthioribulose-1-phosphate (MTRu-1-P). The polypeptide is Methylthioribose-1-phosphate isomerase (Synechococcus sp. (strain ATCC 27144 / PCC 6301 / SAUG 1402/1) (Anacystis nidulans)).